A 65-amino-acid polypeptide reads, in one-letter code: Large ribosomal subunit protein uL29 (65 aa).

Residues 30-49 form a disordered region; the sequence is ERSSVAMGGAPSSPGKMRSI.

This sequence belongs to the universal ribosomal protein uL29 family.

The chain is Large ribosomal subunit protein uL29 from Picrophilus torridus (strain ATCC 700027 / DSM 9790 / JCM 10055 / NBRC 100828 / KAW 2/3).